A 657-amino-acid polypeptide reads, in one-letter code: Threonine--tRNA ligase (657 aa).

In terms of domain architecture, TGS spans 7 to 70 (SQTQVTVTLP…SEDASIEIVT (64 aa)). The catalytic stretch occupies residues 253 to 555 (DHRKLGAELE…LIEHTGGNFP (303 aa)). Zn(2+) contacts are provided by C351, H402, and H532.

Belongs to the class-II aminoacyl-tRNA synthetase family. As to quaternary structure, homodimer. Zn(2+) serves as cofactor.

Its subcellular location is the cytoplasm. It catalyses the reaction tRNA(Thr) + L-threonine + ATP = L-threonyl-tRNA(Thr) + AMP + diphosphate + H(+). Its function is as follows. Catalyzes the attachment of threonine to tRNA(Thr) in a two-step reaction: L-threonine is first activated by ATP to form Thr-AMP and then transferred to the acceptor end of tRNA(Thr). Also edits incorrectly charged L-seryl-tRNA(Thr). The chain is Threonine--tRNA ligase from Prosthecochloris aestuarii (strain DSM 271 / SK 413).